A 269-amino-acid chain; its full sequence is Trans-aconitate 2-methyltransferase (269 aa).

The protein belongs to the methyltransferase superfamily. Tam family.

It localises to the cytoplasm. The catalysed reaction is trans-aconitate + S-adenosyl-L-methionine = (E)-3-(methoxycarbonyl)pent-2-enedioate + S-adenosyl-L-homocysteine. Functionally, catalyzes the S-adenosylmethionine monomethyl esterification of trans-aconitate. The protein is Trans-aconitate 2-methyltransferase of Streptomyces avermitilis (strain ATCC 31267 / DSM 46492 / JCM 5070 / NBRC 14893 / NCIMB 12804 / NRRL 8165 / MA-4680).